A 73-amino-acid chain; its full sequence is Large ribosomal subunit protein bL31 (73 aa).

It belongs to the bacterial ribosomal protein bL31 family. Type A subfamily. Part of the 50S ribosomal subunit.

Functionally, binds the 23S rRNA. The chain is Large ribosomal subunit protein bL31 from Rhizobium etli (strain CIAT 652).